Here is a 284-residue protein sequence, read N- to C-terminus: NAD kinase (284 aa).

The active-site Proton acceptor is the Asp60. Residues 60-61, 134-135, Arg145, Lys162, Asp164, 175-180, and Gln234 each bind NAD(+); these read DG, ND, and TAYSFS.

Belongs to the NAD kinase family. A divalent metal cation is required as a cofactor.

The protein localises to the cytoplasm. The enzyme catalyses NAD(+) + ATP = ADP + NADP(+) + H(+). In terms of biological role, involved in the regulation of the intracellular balance of NAD and NADP, and is a key enzyme in the biosynthesis of NADP. Catalyzes specifically the phosphorylation on 2'-hydroxyl of the adenosine moiety of NAD to yield NADP. This Clostridium beijerinckii (strain ATCC 51743 / NCIMB 8052) (Clostridium acetobutylicum) protein is NAD kinase.